We begin with the raw amino-acid sequence, 125 residues long: Fluoride-specific ion channel FluC (125 aa).

The next 4 membrane-spanning stretches (helical) occupy residues 5-25, 33-53, 66-86, and 100-120; these read IFLV…VSLL, IFPL…GILV, VKIF…SFSL, and LVLY…LGYI. 2 residues coordinate Na(+): Gly-76 and Thr-79.

Belongs to the fluoride channel Fluc/FEX (TC 1.A.43) family.

It localises to the cell inner membrane. It carries out the reaction fluoride(in) = fluoride(out). With respect to regulation, na(+) is not transported, but it plays an essential structural role and its presence is essential for fluoride channel function. In terms of biological role, fluoride-specific ion channel. Important for reducing fluoride concentration in the cell, thus reducing its toxicity. This is Fluoride-specific ion channel FluC from Azobacteroides pseudotrichonymphae genomovar. CFP2.